A 264-amino-acid polypeptide reads, in one-letter code: Thymidylate synthase (264 aa).

DUMP is bound at residue Arg21. His51 contacts (6R)-5,10-methylene-5,6,7,8-tetrahydrofolate. 126 to 127 (RR) lines the dUMP pocket. The Nucleophile role is filled by Cys146. DUMP contacts are provided by residues 166 to 169 (RSCD), Asn177, and 207 to 209 (HLY). (6R)-5,10-methylene-5,6,7,8-tetrahydrofolate is bound at residue Asp169. Position 263 (Ala263) interacts with (6R)-5,10-methylene-5,6,7,8-tetrahydrofolate.

Belongs to the thymidylate synthase family. Bacterial-type ThyA subfamily. As to quaternary structure, homodimer.

It is found in the cytoplasm. The enzyme catalyses dUMP + (6R)-5,10-methylene-5,6,7,8-tetrahydrofolate = 7,8-dihydrofolate + dTMP. The protein operates within pyrimidine metabolism; dTTP biosynthesis. Functionally, catalyzes the reductive methylation of 2'-deoxyuridine-5'-monophosphate (dUMP) to 2'-deoxythymidine-5'-monophosphate (dTMP) while utilizing 5,10-methylenetetrahydrofolate (mTHF) as the methyl donor and reductant in the reaction, yielding dihydrofolate (DHF) as a by-product. This enzymatic reaction provides an intracellular de novo source of dTMP, an essential precursor for DNA biosynthesis. This chain is Thymidylate synthase, found in Salmonella typhi.